The chain runs to 257 residues: Putative hydro-lyase Bcenmc03_3969 (257 aa).

The protein belongs to the D-glutamate cyclase family.

In Burkholderia orbicola (strain MC0-3), this protein is Putative hydro-lyase Bcenmc03_3969.